Reading from the N-terminus, the 333-residue chain is MVSLSILDQSPVSEGSNAETALQQTVALAQAAEDLGYKRFWVSEHHFSKRLAGSSPEVLISHIAAKTKRIRVGSGGVMLPHYSAYKVAENFRVLEGLTPGRIDLGLGRAPGGMPIASWALNDGGKRNADQYPQQIKELTMYLHDLADDKHRFPNLTAAPHISTAPDVWLLGSSGESALLAAESGAGYMFAHFINGEGGEGTVRQYKRRFKPSVLGDTPRAAVAVFVLCADTEEKAEELGAVLDFTLLAGEQGIPLEGVPSYEAVRKNTYSPYEQRRIADNRNRMIVGTKEQVKERLLALSNAYETEEIMVVTITHHFEDKLRSYRLLQEAFAD.

To bacterial alkanal monooxygenase alpha and beta chains.

This is an uncharacterized protein from Bacillus subtilis (strain 168).